The following is a 505-amino-acid chain: Histidine ammonia-lyase (505 aa).

The segment at residues 141-143 (ASG) is a cross-link (5-imidazolinone (Ala-Gly)). Ser-142 is subject to 2,3-didehydroalanine (Ser).

It belongs to the PAL/histidase family. Contains an active site 4-methylidene-imidazol-5-one (MIO), which is formed autocatalytically by cyclization and dehydration of residues Ala-Ser-Gly.

The protein localises to the cytoplasm. The catalysed reaction is L-histidine = trans-urocanate + NH4(+). It participates in amino-acid degradation; L-histidine degradation into L-glutamate; N-formimidoyl-L-glutamate from L-histidine: step 1/3. The polypeptide is Histidine ammonia-lyase (Bacillus cereus (strain 03BB102)).